Reading from the N-terminus, the 338-residue chain is UDP-N-acetylglucosamine--N-acetylmuramyl-(pentapeptide) pyrophosphoryl-undecaprenol N-acetylglucosamine transferase (338 aa).

UDP-N-acetyl-alpha-D-glucosamine-binding positions include 10–12, Asn122, Ser177, and Gln275; that span reads TGG.

It belongs to the glycosyltransferase 28 family. MurG subfamily.

Its subcellular location is the cell inner membrane. It catalyses the reaction di-trans,octa-cis-undecaprenyl diphospho-N-acetyl-alpha-D-muramoyl-L-alanyl-D-glutamyl-meso-2,6-diaminopimeloyl-D-alanyl-D-alanine + UDP-N-acetyl-alpha-D-glucosamine = di-trans,octa-cis-undecaprenyl diphospho-[N-acetyl-alpha-D-glucosaminyl-(1-&gt;4)]-N-acetyl-alpha-D-muramoyl-L-alanyl-D-glutamyl-meso-2,6-diaminopimeloyl-D-alanyl-D-alanine + UDP + H(+). It functions in the pathway cell wall biogenesis; peptidoglycan biosynthesis. Cell wall formation. Catalyzes the transfer of a GlcNAc subunit on undecaprenyl-pyrophosphoryl-MurNAc-pentapeptide (lipid intermediate I) to form undecaprenyl-pyrophosphoryl-MurNAc-(pentapeptide)GlcNAc (lipid intermediate II). The chain is UDP-N-acetylglucosamine--N-acetylmuramyl-(pentapeptide) pyrophosphoryl-undecaprenol N-acetylglucosamine transferase from Sulfurovum sp. (strain NBC37-1).